We begin with the raw amino-acid sequence, 493 residues long: Guanosine-5'-triphosphate,3'-diphosphate pyrophosphatase (493 aa).

This sequence belongs to the GppA/Ppx family. GppA subfamily.

It catalyses the reaction guanosine 3'-diphosphate 5'-triphosphate + H2O = guanosine 3',5'-bis(diphosphate) + phosphate + H(+). The protein operates within purine metabolism; ppGpp biosynthesis; ppGpp from GTP: step 2/2. In terms of biological role, catalyzes the conversion of pppGpp to ppGpp. Guanosine pentaphosphate (pppGpp) is a cytoplasmic signaling molecule which together with ppGpp controls the 'stringent response', an adaptive process that allows bacteria to respond to amino acid starvation, resulting in the coordinated regulation of numerous cellular activities. This is Guanosine-5'-triphosphate,3'-diphosphate pyrophosphatase from Salmonella agona (strain SL483).